Consider the following 248-residue polypeptide: Carbohydrate deacetylase (248 aa).

The Mg(2+) site is built by His59 and His121.

This sequence belongs to the YdjC deacetylase family. Requires Mg(2+) as cofactor.

In terms of biological role, probably catalyzes the deacetylation of acetylated carbohydrates an important step in the degradation of oligosaccharides. This chain is Carbohydrate deacetylase, found in Brevibacillus brevis (strain 47 / JCM 6285 / NBRC 100599).